A 345-amino-acid polypeptide reads, in one-letter code: Phosphoribosylformylglycinamidine cyclo-ligase (345 aa).

Belongs to the AIR synthase family.

The protein localises to the cytoplasm. It carries out the reaction 2-formamido-N(1)-(5-O-phospho-beta-D-ribosyl)acetamidine + ATP = 5-amino-1-(5-phospho-beta-D-ribosyl)imidazole + ADP + phosphate + H(+). Its pathway is purine metabolism; IMP biosynthesis via de novo pathway; 5-amino-1-(5-phospho-D-ribosyl)imidazole from N(2)-formyl-N(1)-(5-phospho-D-ribosyl)glycinamide: step 2/2. The chain is Phosphoribosylformylglycinamidine cyclo-ligase from Pseudoalteromonas atlantica (strain T6c / ATCC BAA-1087).